Consider the following 257-residue polypeptide: Diphthine synthase (257 aa).

Residues L9, D86, V89, 114 to 115 (SI), L166, A207, and H232 contribute to the S-adenosyl-L-methionine site.

It belongs to the diphthine synthase family. As to quaternary structure, homodimer.

The catalysed reaction is 2-[(3S)-amino-3-carboxypropyl]-L-histidyl-[translation elongation factor 2] + 3 S-adenosyl-L-methionine = diphthine-[translation elongation factor 2] + 3 S-adenosyl-L-homocysteine + 3 H(+). It functions in the pathway protein modification; peptidyl-diphthamide biosynthesis. Its function is as follows. S-adenosyl-L-methionine-dependent methyltransferase that catalyzes the trimethylation of the amino group of the modified target histidine residue in translation elongation factor 2 (EF-2), to form an intermediate called diphthine. The three successive methylation reactions represent the second step of diphthamide biosynthesis. The polypeptide is Diphthine synthase (Methanocella arvoryzae (strain DSM 22066 / NBRC 105507 / MRE50)).